The sequence spans 98 residues: Plastocyanin (98 aa).

The region spanning 1-98 (AAIVKLGGDD…AGMKMTITVQ (98 aa)) is the Plastocyanin-like domain. Cu cation is bound by residues H38, C83, H86, and M91.

The protein belongs to the plastocyanin family. Cu(2+) serves as cofactor.

The protein resides in the plastid. The protein localises to the chloroplast thylakoid membrane. In terms of biological role, participates in electron transfer between P700 and the cytochrome b6-f complex in photosystem I. The sequence is that of Plastocyanin (PETE) from Ulva prolifera (Green seaweed).